The following is a 608-amino-acid chain: Serine/threonine-protein kinase SSN3 (608 aa).

Residues 1–72 (MSYSSASFRK…PGTVGTRTSI (72 aa)) form a disordered region. Residues 17–47 (SQPSQTTTTTTSANQPQSQSQQQPLQQSQQQ) are compositionally biased toward low complexity. Positions 49–59 (LHMKPNPHIPH) are enriched in basic residues. Positions 104 to 492 (YQIMGYIAAG…ADQALLHPYF (389 aa)) constitute a Protein kinase domain. ATP contacts are provided by residues 110-118 (IAAGTYGKV) and lysine 182. Aspartate 307 functions as the Proton acceptor in the catalytic mechanism. A disordered region spans residues 523–608 (MTTAANNNNN…LPGGIRKKRG (86 aa)). The segment covering 528-583 (NNNNNNNNNNNNNNNNNNNNNNNNNNNSGHQLSQQQNVQIQQVHQMQQQIHSQQLQ) has biased composition (low complexity).

It belongs to the protein kinase superfamily. CMGC Ser/Thr protein kinase family. CDC2/CDKX subfamily. In terms of assembly, component of the SRB8-11 complex, a regulatory module of the Mediator complex. The cofactor is Mg(2+).

The protein localises to the nucleus. The enzyme catalyses L-seryl-[protein] + ATP = O-phospho-L-seryl-[protein] + ADP + H(+). It catalyses the reaction L-threonyl-[protein] + ATP = O-phospho-L-threonyl-[protein] + ADP + H(+). It carries out the reaction [DNA-directed RNA polymerase] + ATP = phospho-[DNA-directed RNA polymerase] + ADP + H(+). In terms of biological role, component of the SRB8-11 complex. The SRB8-11 complex is a regulatory module of the Mediator complex which is itself involved in regulation of basal and activated RNA polymerase II-dependent transcription. The SRB8-11 complex may be involved in the transcriptional repression of a subset of genes regulated by Mediator. It may inhibit the association of the Mediator complex with RNA polymerase II to form the holoenzyme complex. The SRB8-11 complex phosphorylates the C-terminal domain (CTD) of the largest subunit of RNA polymerase II. The sequence is that of Serine/threonine-protein kinase SSN3 (SSN3) from Candida albicans (strain SC5314 / ATCC MYA-2876) (Yeast).